The following is a 245-amino-acid chain: Ribosomal RNA small subunit methyltransferase G (245 aa).

Residues glycine 79, phenylalanine 84, 130 to 131, and arginine 150 contribute to the S-adenosyl-L-methionine site; that span reads AE.

This sequence belongs to the methyltransferase superfamily. RNA methyltransferase RsmG family.

The protein resides in the cytoplasm. Its function is as follows. Specifically methylates the N7 position of a guanine in 16S rRNA. The chain is Ribosomal RNA small subunit methyltransferase G from Limosilactobacillus fermentum (strain NBRC 3956 / LMG 18251) (Lactobacillus fermentum).